A 469-amino-acid polypeptide reads, in one-letter code: Protein apterous (469 aa).

Disordered regions lie at residues Gly21–Ala44 and Glu111–Ile141. LIM zinc-binding domains are found at residues Cys148–Asp200 and Cys210–His263. Residues Thr367 to Met426 constitute a DNA-binding region (homeobox).

Expressed in PNS and CNS.

It localises to the nucleus. Its function is as follows. Required for the normal development of the wing and halter imaginal disks. This is Protein apterous (ap) from Drosophila melanogaster (Fruit fly).